Here is a 694-residue protein sequence, read N- to C-terminus: Cyclic nucleotide-gated channel alpha-3 (694 aa).

Polar residues-rich tracts occupy residues Met1–Pro11 and Ser112–Ser123. 2 disordered regions span residues Met1–Asp24 and Glu109–Lys152. At Met1–Arg170 the chain is on the cytoplasmic side. The helical transmembrane segment at Trp171 to Phe192 threads the bilayer. Over Asp193 to Glu198 the chain is Extracellular. A helical transmembrane segment spans residues Tyr199–Leu219. The Cytoplasmic segment spans residues Val220–Thr246. The chain crosses the membrane as a helical span at residues Thr247–Val266. The Extracellular portion of the chain corresponds to Gly267–Tyr270. A helical membrane pass occupies residues Pro271–Phe288. Over Asp289–Pro298 the chain is Cytoplasmic. Residues Pro298–Met406 form an ion conduction pathway region. Residues Asn299–Tyr321 traverse the membrane as a helical segment. The Extracellular segment spans residues Phe322–Arg347. Asn339 carries N-linked (GalNAc...) asparagine glycosylation. 2 helical membrane-spanning segments follow: residues Leu348–Tyr378 and Leu379–Ile403. A selectivity filter region spans residues Thr365–Glu368. Residues Ser404–Gln694 lie on the Cytoplasmic side of the membrane. The segment at Ala408 to Asp485 is C-linker. A cyclic nucleotide-binding domain region spans residues Ala488–Lys608. 6 residues coordinate 3',5'-cyclic GMP: Gly548, Glu549, Ser551, Arg564, Thr565, and Asp609. A coiled-coil region spans residues Leu626–Val669. Residues Leu662–Gln694 form a disordered region.

The protein belongs to the cyclic nucleotide-gated cation channel (TC 1.A.1.5) family. CNGA3 subfamily. As to quaternary structure, forms heterotetrameric channels composed of CNGA3 and CNGB3 subunits with 3:1 stoichiometry. Prominently expressed in retina.

It localises to the cell membrane. The catalysed reaction is Ca(2+)(in) = Ca(2+)(out). It catalyses the reaction Na(+)(in) = Na(+)(out). The enzyme catalyses K(+)(in) = K(+)(out). It carries out the reaction NH4(+)(in) = NH4(+)(out). The catalysed reaction is Rb(+)(in) = Rb(+)(out). It catalyses the reaction Li(+)(in) = Li(+)(out). The enzyme catalyses Cs(+)(in) = Cs(+)(out). Inhibited by L-cis-diltiazem. Functionally, pore-forming subunit of the cone cyclic nucleotide-gated channel. Mediates cone photoresponses at bright light converting transient changes in intracellular cGMP levels into electrical signals. In the dark, cGMP levels are high and keep the channel open enabling a steady inward current carried by Na(+) and Ca(2+) ions that leads to membrane depolarization and neurotransmitter release from synaptic terminals. Upon photon absorption cGMP levels decline leading to channel closure and membrane hyperpolarization that ultimately slows neurotransmitter release and signals the presence of light, the end point of the phototransduction cascade. Pore-forming subunit of the gustatory cyclic nucleotide-gated channel. In the taste buds, may sense oral extracellular pH and conduct ion currents that modulate the excitability of taste cells. Conducts cGMP- and cAMP-gated ion currents, with permeability for monovalent and divalent cations. The sequence is that of Cyclic nucleotide-gated channel alpha-3 from Homo sapiens (Human).